A 59-amino-acid polypeptide reads, in one-letter code: Large ribosomal subunit protein bL32 (59 aa).

The disordered stretch occupies residues 1–22 (MAVQQNKKSPSKRGMHRSHDFL).

The protein belongs to the bacterial ribosomal protein bL32 family.

This is Large ribosomal subunit protein bL32 from Thiobacillus denitrificans (strain ATCC 25259 / T1).